We begin with the raw amino-acid sequence, 892 residues long: DNA mismatch repair protein MutS (892 aa).

Residues 663–684 (TNTSLREAAPTTTLSTSDQGQM) form a disordered region. 696–703 (GPNASGKS) serves as a coordination point for ATP.

Belongs to the DNA mismatch repair MutS family.

This protein is involved in the repair of mismatches in DNA. It is possible that it carries out the mismatch recognition step. This protein has a weak ATPase activity. This chain is DNA mismatch repair protein MutS, found in Nostoc punctiforme (strain ATCC 29133 / PCC 73102).